Reading from the N-terminus, the 388-residue chain is Norsolorinic acid reductase A (388 aa).

An NADP(+)-binding site is contributed by D69. Y74 functions as the Proton donor in the catalytic mechanism. H148 is a substrate binding site. NADP(+) contacts are provided by residues 178–179 (SD), Q204, 233–243 (GVLGRGQFRSA), and 300–308 (RKVEHLKEN).

Belongs to the aldo/keto reductase family. Aldo/keto reductase 2 subfamily.

Its pathway is mycotoxin biosynthesis; aflatoxin biosynthesis. Functionally, norsolorinic acid reductase; part of the gene cluster that mediates the biosynthesis of aflatoxins, a group of polyketide-derived furanocoumarins, and part of the most toxic and carcinogenic compounds among the known mycotoxins. The four major aflatoxins produced by A.parasiticus are aflatoxin B1 (AFB1), aflatoxin B2 (AFB2), aflatoxin G1 (AFG1) and aflatoxin G2 (AFG2). Within the aflatoxin pathway, the norsolorinic acid reductase aflE may play a role in the conversion of norsolorinic acid (NOR) to averantin (AVN). The biosynthesis of aflatoxins begins with the norsolorinic acid synthase aflC that combines a hexanoyl starter unit produced by the fatty acid synthase aflA/aflB and 7 malonyl-CoA extender units to synthesize the precursor NOR. The second step is the conversion of NOR to averantin and requires the norsolorinic acid ketoreductase aflD, which catalyzes the dehydration of norsolorinic acid to form (1'S)-averantin. The norsolorinic acid reductases aflE and aflF may also play a role in the conversion of NOR to AVN. The cytochrome P450 monooxygenase aflG then catalyzes the hydroxylation of AVN to 5'hydroxyaverantin (HAVN). The next step is performed by the 5'-hydroxyaverantin dehydrogenase aflH that transforms HAVN to 5'-oxoaverantin (OAVN) which is further converted to averufin (AVF) by aflK that plays a dual role in the pathway, as a 5'-oxoaverantin cyclase that mediates conversion of 5'-oxoaverantin, as well as a versicolorin B synthase in a later step in the pathway. The averufin oxidase aflI catalyzes the conversion of AVF to versiconal hemiacetal acetate (VHA). VHA is then the substrate for the versiconal hemiacetal acetate esterase aflJ to yield versiconal (VAL). Versicolorin B synthase aflK then converts VAL to versicolorin B (VERB) by closing the bisfuran ring of aflatoxin which is required for DNA-binding, thus giving to aflatoxin its activity as a mutagen. Then, the activity of the versicolorin B desaturase aflL leads to versicolorin A (VERA). A branch point starts from VERB since it can also be converted to dihydrodemethylsterigmatocystin (DMDHST), probably also by aflL, VERA being a precursor for aflatoxins B1 and G1, and DMDHST for aflatoxins B2 and G2. Next, the versicolorin reductase aflM and the cytochrome P450 monooxygenase aflN are involved in conversion of VERA to demethylsterigmatocystin (DMST). AflX and aflY seem also involved in this step, through probable aflX-mediated epoxide ring-opening step following versicolorin A oxidation and aflY-mediated Baeyer-Villiger oxidation required for the formation of the xanthone ring. The methyltransferase aflO then leads to the modification of DMST to sterigmatocystin (ST), and of DMDHST to dihydrosterigmatocystin (DHST). Both ST and DHST are then substrates of the O-methyltransferase aflP to yield O-methylsterigmatocystin (OMST) and dihydro-O-methylsterigmatocystin (DHOMST), respectively. Finally OMST is converted to aflatoxins B1 and G1, and DHOMST to aflatoxins B2 and G2, via the action of several enzymes including O-methylsterigmatocystin oxidoreductase aflQ, the cytochrome P450 monooxygenase aflU, but also the NADH-dependent flavin oxidoreductase nadA which is specifically required for the synthesis of AFG1. The protein is Norsolorinic acid reductase A of Aspergillus parasiticus (strain ATCC 56775 / NRRL 5862 / SRRC 143 / SU-1).